A 210-amino-acid chain; its full sequence is MPSRSKSSQRWLKEHFADPYVKKAQAEGMRSRAAYKLEELLQRDRLLKPGMVVVDLGAAPGGWSQQVRKSMGDSGRVVALDILDMPALAGVEFLHGDFREQAVLSQFEAMLGDVPVDLVLSDMAPNKSGMDAVDQPRMMHLAELAMEFADTHLKPGGAFLIKLFQGVGSDDYIRELRRRYEKVTIRKPAASRKRSPEVYALGQGKRVQIK.

S-adenosyl-L-methionine-binding residues include Gly-61, Trp-63, Asp-81, Asp-97, and Asp-122. The Proton acceptor role is filled by Lys-162.

The protein belongs to the class I-like SAM-binding methyltransferase superfamily. RNA methyltransferase RlmE family.

It is found in the cytoplasm. It catalyses the reaction uridine(2552) in 23S rRNA + S-adenosyl-L-methionine = 2'-O-methyluridine(2552) in 23S rRNA + S-adenosyl-L-homocysteine + H(+). Functionally, specifically methylates the uridine in position 2552 of 23S rRNA at the 2'-O position of the ribose in the fully assembled 50S ribosomal subunit. In Xanthomonas axonopodis pv. citri (strain 306), this protein is Ribosomal RNA large subunit methyltransferase E.